We begin with the raw amino-acid sequence, 493 residues long: Glutamyl-tRNA(Gln) amidotransferase subunit A (493 aa).

Residues Lys-79 and Ser-159 each act as charge relay system in the active site. The active-site Acyl-ester intermediate is the Ser-183.

This sequence belongs to the amidase family. GatA subfamily. In terms of assembly, heterotrimer of A, B and C subunits.

It carries out the reaction L-glutamyl-tRNA(Gln) + L-glutamine + ATP + H2O = L-glutaminyl-tRNA(Gln) + L-glutamate + ADP + phosphate + H(+). In terms of biological role, allows the formation of correctly charged Gln-tRNA(Gln) through the transamidation of misacylated Glu-tRNA(Gln) in organisms which lack glutaminyl-tRNA synthetase. The reaction takes place in the presence of glutamine and ATP through an activated gamma-phospho-Glu-tRNA(Gln). The chain is Glutamyl-tRNA(Gln) amidotransferase subunit A from Chelativorans sp. (strain BNC1).